Here is a 524-residue protein sequence, read N- to C-terminus: MAKKTASKKKSVSRKVTKTSSKKATARKGAVAKAAKKSVKKAAPRKSATARRPKGPVWQWSAVDTAAAIRSGAISAVETVEAHLDRMRAVNPRLNAVVVDLSKEALKAAHAADKQRAKGGELGLLHGVPITIKENVDYEGRPNFNGVPANKDYIAPSDAPVVRNLKKAGAIVIGLTNTPEFSFRGFTDNPLHGLTLNPWDPDITCGGSSGGAGSAVAAGIGTIAHGNDIGGSLRWPAHCNGVATIKPTQGRIPAFNGSATAERPMLAHLMSAQGPLARHVADVRLALEVMSQRDPRDPWWVPAPLVGPKPKGPIKVALAKIPDDMDVDPAVAAALRRAADHLERSGYRVSEVEVPDINGVWQTWCDIITNETMVMQEAAMLKVTSEDFHNAWNGMKAKANVLDLKAWMQATAARNGHIRAWQLFFEDYPVVLAPTTVSPTPGPRDDTISAERVQEVFWGGIRFISAINVLGLPGAVVPVALHEGKPIGVQLITGRYREDLALDAAAAIENRAGVLAHRLWETMD.

2 stretches are compositionally biased toward basic residues: residues 1–26 (MAKK…KATA) and 34–54 (AAKK…RRPK). The segment at 1-56 (MAKKTASKKKSVSRKVTKTSSKKATARKGAVAKAAKKSVKKAAPRKSATARRPKGP) is disordered. Active-site charge relay system residues include K133 and S208. S232 functions as the Acyl-ester intermediate in the catalytic mechanism.

It belongs to the amidase family.

The protein operates within plant hormone metabolism; auxin biosynthesis. In terms of biological role, hydrolyzes indole-3-acetamide (IAM) into indole-3-acetic acid (IAA). The sequence is that of Indoleacetamide hydrolase (bam) from Bradyrhizobium diazoefficiens (strain JCM 10833 / BCRC 13528 / IAM 13628 / NBRC 14792 / USDA 110).